The primary structure comprises 443 residues: ATP-dependent protease ATPase subunit HslU (443 aa).

ATP contacts are provided by residues I18, G60–E65, D256, E321, and R393.

It belongs to the ClpX chaperone family. HslU subfamily. In terms of assembly, a double ring-shaped homohexamer of HslV is capped on each side by a ring-shaped HslU homohexamer. The assembly of the HslU/HslV complex is dependent on binding of ATP.

The protein localises to the cytoplasm. Functionally, ATPase subunit of a proteasome-like degradation complex; this subunit has chaperone activity. The binding of ATP and its subsequent hydrolysis by HslU are essential for unfolding of protein substrates subsequently hydrolyzed by HslV. HslU recognizes the N-terminal part of its protein substrates and unfolds these before they are guided to HslV for hydrolysis. In Pectobacterium atrosepticum (strain SCRI 1043 / ATCC BAA-672) (Erwinia carotovora subsp. atroseptica), this protein is ATP-dependent protease ATPase subunit HslU.